The primary structure comprises 110 residues: Iron-sulfur cluster assembly protein CyaY (110 aa).

It belongs to the frataxin family.

Functionally, involved in iron-sulfur (Fe-S) cluster assembly. May act as a regulator of Fe-S biogenesis. This is Iron-sulfur cluster assembly protein CyaY from Pseudomonas syringae pv. tomato (strain ATCC BAA-871 / DC3000).